Here is an 828-residue protein sequence, read N- to C-terminus: MQCCNQLSPHEQRLQDKIEGKVDRYRATHERVFTILESFDNTRPRIDVERAKYFTESMKATEGQPLPLRWAKALMHIAENMTVYIDDHQLICGRAGYQGRYGVLYPELDGDFLGTAIEDLPNRAESPFAITPEDARVVVEEIAPFWKGKTYHEALNLALPADVHKLTYDDPQGLMSRFIVNETSSFRSSIQWVHDYEKVLKRGFRSIKEEALEKIAALDPMSPCDNVEKRPFLEAIVIVCDAIILWAKRHAKLAAELAAKETDPTRKRELETMAEICAWVPENPARTFHEAVQAQWFTQVFSRIEQKTGTIVSNGRMDQYFWPFYEKDLAEGRITEDSALELLECMWVGMAQYVDLYISPTGGAFNEGYAHWEAVTIGGQTPEGRDATNDLTYLFLKSKREFPLHYPDLAARIHSRSPERYLWEVAETIKDGSGFPKLINDEEVVPLYVSKGATFAEALDYAVSGCTEARMPNRDTYTSGGAYINFAAALEMVLYNGKMLKYGDTDLGAHTGDPCEFKTWEEFWNAYVTQHHLFLKTAFVQQHIINNLRARHFAQPMGSSLHDLCMKHCLDLHTPQIPEGINLGYFEYMGFGTVVDSLSAIKKLVFEDKKLTMGELIEALKCNFEGKEDIQQLLKSAPCYGNNDDYADSIARDIDALSVKYGRRYSPELGMHNDVRYVPFTSHVPFGRVVSATPNGRKAWSALSDGSSASHGADVNGPTAILQSNFNSKNYGMRDRAARMLNIKFTPKCVEGEEGSQKLVSFIRTFCDLKLWHVQFNVINKETLLAAQRDPEKYRNLIVRIAGYSAYFVDLSPDLQNDLIARTGHDVM.

Positions 30-698 constitute a PFL domain; the sequence is ERVFTILESF…VVSATPNGRK (669 aa). 2-hydroxyethane-1-sulfonate contacts are provided by residues R187, Q191, 466–468, and R676; that span reads CTE. The Cysteine radical intermediate role is filled by C466. Catalysis depends on E468, which acts as the Proton acceptor. The Glycine radical domain maps to 705–828; the sequence is DGSSASHGAD…LIARTGHDVM (124 aa). G803 is modified (glycine radical).

It belongs to the glycyl radical enzyme (GRE) family. Homodimer. In terms of processing, requires the activating protein IseH to generate the key active site glycyl radical on Gly-803 that is involved in catalysis.

It catalyses the reaction 2-hydroxyethane-1-sulfonate = acetaldehyde + sulfite + H(+). It participates in organosulfur degradation; alkanesulfonate degradation. Its function is as follows. Involved in an anaerobic respiration pathway that converts the sulfonate isethionate (2-hydroxyethanesulfonate) to ammonia, acetate and sulfide. Catalyzes the radical-mediated C-S bond cleavage of isethionate (2-hydroxyethanesulfonate) to form sulfite and acetaldehyde. Shows no activity with taurine or ethanolamine as substrates. The protein is Isethionate sulfite-lyase of Nitratidesulfovibrio vulgaris (strain ATCC 29579 / DSM 644 / CCUG 34227 / NCIMB 8303 / VKM B-1760 / Hildenborough) (Desulfovibrio vulgaris).